A 489-amino-acid chain; its full sequence is Adenosylhomocysteinase (489 aa).

Substrate is bound by residues T68, D151, and E213. 214–216 (TTT) serves as a coordination point for NAD(+). Substrate is bound by residues K243 and D247. Residues N248, 277–282 (GYGDVG), E300, N335, 356–358 (IGH), and N403 each bind NAD(+).

This sequence belongs to the adenosylhomocysteinase family. NAD(+) serves as cofactor.

The protein resides in the cytoplasm. The enzyme catalyses S-adenosyl-L-homocysteine + H2O = L-homocysteine + adenosine. It functions in the pathway amino-acid biosynthesis; L-homocysteine biosynthesis; L-homocysteine from S-adenosyl-L-homocysteine: step 1/1. Its function is as follows. May play a key role in the regulation of the intracellular concentration of adenosylhomocysteine. This is Adenosylhomocysteinase from Mycobacterium sp. (strain JLS).